Consider the following 325-residue polypeptide: SAM pointed domain-containing Ets transcription factor (325 aa).

Disordered regions lie at residues 27–50 (GTEK…PPAT) and 79–100 (ARAG…SQAS). The 85-residue stretch at 119–203 (EVLKDIETAC…AHLDIWKSAA (85 aa)) folds into the PNT domain. Positions 239–322 (IHLWQFLKEL…ISQRLVYQFV (84 aa)) form a DNA-binding region, ETS.

It belongs to the ETS family. In terms of assembly, interacts with the DNA-binding domain of the androgen receptor. Interacts with NKX3-1. In terms of tissue distribution, expressed in the accessory glands of sex organs including the prostate, seminal vesicle, coagulating gland in males, the oviduct in females, and in intestines. Expression is epithelial-specific.

It localises to the nucleus. Functionally, may function as an androgen-independent transactivator of the prostate-specific antigen (PSA) promoter. Binds to 5'-GGAT-3' DNA sequences. May play a role in the regulation of the prostate gland and/or prostate cancer development. Acts as a transcriptional activator for SERPINB5 promoter. In Mus musculus (Mouse), this protein is SAM pointed domain-containing Ets transcription factor (Spdef).